The following is a 182-amino-acid chain: MSEEVGAKRWYAVHTYSGYENKVKKNLEKRVESMNMTEQIFRVVIPEEEETQVKDGKAKKLVKKTFPGYVLVELIMTDESWYVVRNTPGVTGFVGSAGAGSKPNPLLPEEVRFILKQMGLKEKTIDVELDVGEQVRIQSGPFANQIGEVQEIEADKFKLTVLVDMFGRETPVEVEFDQIEKL.

The KOW domain occupies 131-163; that stretch reads VGEQVRIQSGPFANQIGEVQEIEADKFKLTVLV.

Belongs to the NusG family.

In terms of biological role, participates in transcription elongation, termination and antitermination. In Staphylococcus epidermidis (strain ATCC 35984 / DSM 28319 / BCRC 17069 / CCUG 31568 / BM 3577 / RP62A), this protein is Transcription termination/antitermination protein NusG.